Here is a 109-residue protein sequence, read N- to C-terminus: SKSSIETPPSYNQLNYNENLQRFFNSKPVTAPVETDPIKMEQSYSTPANTGSNLSPMQCFEDSGGSGSSRNCTSGSNLNMGSVTNTSNTGTGTSSGSAPLVTLTESLLK.

Composition is skewed to polar residues over residues 42 to 56 (QSYS…NLSP) and 68 to 80 (SSRN…NLNM). A disordered region spans residues 42-109 (QSYSTPANTG…LVTLTESLLK (68 aa)). Residues 81 to 97 (GSVTNTSNTGTGTSSGS) are compositionally biased toward low complexity.

As to quaternary structure, forms a heterodimer with timeless (TIM); the complex then translocates into the nucleus. In terms of processing, phosphorylated with a circadian rhythmicity, probably by the double-time protein (dbt). Phosphorylation could be implicated in the stability of per monomer and in the formation of heterodimer per-tim.

It is found in the nucleus. It localises to the cytoplasm. Its subcellular location is the perinuclear region. Essential for biological clock functions. Determines the period length of circadian and ultradian rhythms; an increase in PER dosage leads to shortened circadian rhythms and a decrease leads to lengthened circadian rhythms. Essential for the circadian rhythmicity of locomotor activity, eclosion behavior, and for the rhythmic component of the male courtship song that originates in the thoracic nervous system. The biological cycle depends on the rhythmic formation and nuclear localization of the TIM-PER complex. Light induces the degradation of TIM, which promotes elimination of PER. Nuclear activity of the heterodimer coordinatively regulates PER and TIM transcription through a negative feedback loop. Behaves as a negative element in circadian transcriptional loop. Does not appear to bind DNA, suggesting indirect transcriptional inhibition. This is Period circadian protein (per) from Musca domestica (House fly).